A 667-amino-acid polypeptide reads, in one-letter code: UvrABC system protein B (667 aa).

The Helicase ATP-binding domain occupies 31 to 414; sequence KNFEAGAKAQ…EAEQTDIQVD (384 aa). 44–51 lines the ATP pocket; it reads GATGTGKT. A Beta-hairpin motif is present at residues 97 to 120; that stretch reads YYDYYQPEAYVPSSDTYIEKDSSI. The Helicase C-terminal domain maps to 435 to 597; that stretch reads QIDDLVGEIN…ITPKTIIKPI (163 aa). The region spanning 630–665 is the UVR domain; sequence LEMVERLSEQMRLAAKKLDFEQAATLRDTILELKSE.

The protein belongs to the UvrB family. Forms a heterotetramer with UvrA during the search for lesions. Interacts with UvrC in an incision complex.

It localises to the cytoplasm. Its function is as follows. The UvrABC repair system catalyzes the recognition and processing of DNA lesions. A damage recognition complex composed of 2 UvrA and 2 UvrB subunits scans DNA for abnormalities. Upon binding of the UvrA(2)B(2) complex to a putative damaged site, the DNA wraps around one UvrB monomer. DNA wrap is dependent on ATP binding by UvrB and probably causes local melting of the DNA helix, facilitating insertion of UvrB beta-hairpin between the DNA strands. Then UvrB probes one DNA strand for the presence of a lesion. If a lesion is found the UvrA subunits dissociate and the UvrB-DNA preincision complex is formed. This complex is subsequently bound by UvrC and the second UvrB is released. If no lesion is found, the DNA wraps around the other UvrB subunit that will check the other stand for damage. The protein is UvrABC system protein B of Latilactobacillus sakei subsp. sakei (strain 23K) (Lactobacillus sakei subsp. sakei).